The sequence spans 1091 residues: ATP-dependent helicase/deoxyribonuclease subunit B (1091 aa).

This sequence belongs to the helicase family. AddB/RexB type 2 subfamily. In terms of assembly, heterodimer of AddA and RexB. Requires Mg(2+) as cofactor.

In terms of biological role, the heterodimer acts as both an ATP-dependent DNA helicase and an ATP-dependent, dual-direction single-stranded exonuclease. Recognizes the chi site generating a DNA molecule suitable for the initiation of homologous recombination. This subunit has 5' -&gt; 3' nuclease activity but not helicase activity. This chain is ATP-dependent helicase/deoxyribonuclease subunit B, found in Streptococcus pneumoniae (strain Hungary19A-6).